Consider the following 286-residue polypeptide: 4-diphosphocytidyl-2-C-methyl-D-erythritol kinase (286 aa).

Lys11 is a catalytic residue. 94–104 (PMGGGIGGGSS) lines the ATP pocket. Residue Asp136 is part of the active site.

This sequence belongs to the GHMP kinase family. IspE subfamily.

It catalyses the reaction 4-CDP-2-C-methyl-D-erythritol + ATP = 4-CDP-2-C-methyl-D-erythritol 2-phosphate + ADP + H(+). It functions in the pathway isoprenoid biosynthesis; isopentenyl diphosphate biosynthesis via DXP pathway; isopentenyl diphosphate from 1-deoxy-D-xylulose 5-phosphate: step 3/6. In terms of biological role, catalyzes the phosphorylation of the position 2 hydroxy group of 4-diphosphocytidyl-2C-methyl-D-erythritol. This Pseudomonas putida (strain W619) protein is 4-diphosphocytidyl-2-C-methyl-D-erythritol kinase.